The sequence spans 140 residues: Heavy metal-associated isoprenylated plant protein 31 (140 aa).

Residues 3 to 67 (MTVEIRVPNL…AVRRAGKAAE (65 aa)) form the HMA domain. A metal cation is bound by residues cysteine 14 and cysteine 17. The residue at position 137 (cysteine 137) is a Cysteine methyl ester. A lipid anchor (S-farnesyl cysteine) is attached at cysteine 137. A propeptide spans 138–140 (TIM) (removed in mature form).

Belongs to the HIPP family.

In terms of biological role, heavy-metal-binding protein. The chain is Heavy metal-associated isoprenylated plant protein 31 from Arabidopsis thaliana (Mouse-ear cress).